A 198-amino-acid polypeptide reads, in one-letter code: MAKILVLYYSMYGHIETMAHAVAEGAKKVDGAEVIIKRVPETMPPEIFAKAGGKTQNAPVATPQELADYDAIIFGTPTRFGNMSGQMRTFLDQTGGLWASGSLYGKLGSVFSSTGTGGGQEQTITSTWTTLAHHGMVIVPIGYAAQELFDVSQVRGGTPYGATTIAGGDGSRQPSQEELSIARYQGEYVAGLAVKLNG.

Positions 4-189 (ILVLYYSMYG…SIARYQGEYV (186 aa)) constitute a Flavodoxin-like domain. FMN contacts are provided by residues 10–15 (SMYGHI) and 78–80 (TRF). Tyrosine 12 is a binding site for NAD(+). Residue tryptophan 98 participates in substrate binding. FMN-binding positions include 113-118 (STGTGG) and histidine 133.

The protein belongs to the WrbA family. FMN serves as cofactor.

The catalysed reaction is a quinone + NADH + H(+) = a quinol + NAD(+). It catalyses the reaction a quinone + NADPH + H(+) = a quinol + NADP(+). This Salmonella paratyphi C (strain RKS4594) protein is NAD(P)H dehydrogenase (quinone).